Reading from the N-terminus, the 323-residue chain is Putative HTH-type transcriptional regulatory protein Hlac_0273 (323 aa).

The HTH cro/C1-type domain occupies Leu132–Leu189. A DNA-binding region (H-T-H motif) is located at residues Leu143 to Asp162. The tract at residues Val188 to Asp211 is disordered.

The chain is Putative HTH-type transcriptional regulatory protein Hlac_0273 from Halorubrum lacusprofundi (strain ATCC 49239 / DSM 5036 / JCM 8891 / ACAM 34).